The following is a 381-amino-acid chain: tRNA pseudouridine synthase Pus10 (381 aa).

Catalysis depends on Asp226, which acts as the Nucleophile.

Belongs to the pseudouridine synthase Pus10 family.

It carries out the reaction uridine(54) in tRNA = pseudouridine(54) in tRNA. The catalysed reaction is uridine(55) in tRNA = pseudouridine(55) in tRNA. Responsible for synthesis of pseudouridine from uracil-54 and uracil-55 in the psi GC loop of transfer RNAs. The protein is tRNA pseudouridine synthase Pus10 of Nitrosopumilus maritimus (strain SCM1).